The sequence spans 302 residues: Cell division protein FtsQ (302 aa).

Residues 1-41 are disordered; sequence MPAVVRGGPPKPRRPRAEAPASPSKGKPAPRKAQPAAKLHA. The Cytoplasmic portion of the chain corresponds to 1 to 50; that stretch reads MPAVVRGGPPKPRRPRAEAPASPSKGKPAPRKAQPAAKLHAARGVGLSPT. Low complexity predominate over residues 18 to 38; the sequence is EAPASPSKGKPAPRKAQPAAK. The helical transmembrane segment at 51–71 threads the bilayer; that stretch reads VALSVAGAALGLGLVVMLATG. The Periplasmic segment spans residues 72-302; the sequence is HRAERLGASM…LPGQPAADGA (231 aa). The POTRA domain maps to 94-162; sequence FRLKTVHIRG…DTVLIAVEER (69 aa).

It belongs to the FtsQ/DivIB family. FtsQ subfamily.

Its subcellular location is the cell inner membrane. In terms of biological role, essential cell division protein. This chain is Cell division protein FtsQ, found in Caulobacter vibrioides (strain ATCC 19089 / CIP 103742 / CB 15) (Caulobacter crescentus).